The primary structure comprises 258 residues: UDP-2,3-diacylglucosamine hydrolase (258 aa).

Mn(2+) contacts are provided by Asp15, His17, Asp48, Asn88, and His123. 88–89 (NR) lines the substrate pocket. Substrate is bound by residues Asp131, Ser169, Asn173, Lys176, and His204. Mn(2+) contacts are provided by His204 and His206.

Belongs to the LpxH family. It depends on Mn(2+) as a cofactor.

The protein localises to the cell inner membrane. It carries out the reaction UDP-2-N,3-O-bis[(3R)-3-hydroxytetradecanoyl]-alpha-D-glucosamine + H2O = 2-N,3-O-bis[(3R)-3-hydroxytetradecanoyl]-alpha-D-glucosaminyl 1-phosphate + UMP + 2 H(+). It functions in the pathway glycolipid biosynthesis; lipid IV(A) biosynthesis; lipid IV(A) from (3R)-3-hydroxytetradecanoyl-[acyl-carrier-protein] and UDP-N-acetyl-alpha-D-glucosamine: step 4/6. Hydrolyzes the pyrophosphate bond of UDP-2,3-diacylglucosamine to yield 2,3-diacylglucosamine 1-phosphate (lipid X) and UMP by catalyzing the attack of water at the alpha-P atom. Involved in the biosynthesis of lipid A, a phosphorylated glycolipid that anchors the lipopolysaccharide to the outer membrane of the cell. This Bordetella bronchiseptica (strain ATCC BAA-588 / NCTC 13252 / RB50) (Alcaligenes bronchisepticus) protein is UDP-2,3-diacylglucosamine hydrolase.